The chain runs to 365 residues: MAQTTKHIVVLPGDHVGQEITEEAIKVLNAISSVRPNVNFDFQHHLIGGAAIDATGVPLPDEALEASKKADAVLLGAVGGPKWGTGSVRPEQGLLKIRKELQLYANLRPCNFASDSLLDLSPLKPEIVKGTDICIVRELVGGIYFGERKEDEGDGVAWDSEKYSVSEVQRITRMAGFLALQHNPPLPVWSLDKANVLASSRLWRKTVEETIKNEFPTLTVQHQLIDSAAMILVKNPTHLNGVVIANNMFGDIISDEASVIPGSLGLLPSASLASLPDTNTAFGLYEPCHGSAPDLPKGKVNPVATILSVAMMLKLSLNMTEEGIAVEKAVKQVLDSGVRTADLRGSNSTSEVGDAIAKAVKEILA.

Residue 80–91 (GPKWGTGSVRPE) coordinates NAD(+). Residues R98, R108, R137, and D226 each contribute to the substrate site. Mg(2+)-binding residues include D226, D251, and D255. 290–301 (GSAPDLPKGKVN) contacts NAD(+).

It belongs to the isocitrate and isopropylmalate dehydrogenases family. In terms of assembly, homodimer. Mg(2+) is required as a cofactor. It depends on Mn(2+) as a cofactor.

The protein localises to the cytoplasm. It carries out the reaction (2R,3S)-3-isopropylmalate + NAD(+) = 4-methyl-2-oxopentanoate + CO2 + NADH. It functions in the pathway amino-acid biosynthesis; L-leucine biosynthesis; L-leucine from 3-methyl-2-oxobutanoate: step 3/4. Its function is as follows. Catalyzes the oxidation of 3-carboxy-2-hydroxy-4-methylpentanoate (3-isopropylmalate) to 3-carboxy-4-methyl-2-oxopentanoate. The product decarboxylates to 4-methyl-2 oxopentanoate. The polypeptide is 3-isopropylmalate dehydrogenase (LEU2) (Maudiozyma exigua (Yeast)).